We begin with the raw amino-acid sequence, 335 residues long: N-acetyl-gamma-glutamyl-phosphate reductase (335 aa).

The active site involves Cys155.

Belongs to the NAGSA dehydrogenase family. Type 1 subfamily.

It is found in the cytoplasm. It carries out the reaction N-acetyl-L-glutamate 5-semialdehyde + phosphate + NADP(+) = N-acetyl-L-glutamyl 5-phosphate + NADPH + H(+). The protein operates within amino-acid biosynthesis; L-arginine biosynthesis; N(2)-acetyl-L-ornithine from L-glutamate: step 3/4. In terms of biological role, catalyzes the NADPH-dependent reduction of N-acetyl-5-glutamyl phosphate to yield N-acetyl-L-glutamate 5-semialdehyde. The chain is N-acetyl-gamma-glutamyl-phosphate reductase from Pasteurella multocida (strain Pm70).